The following is a 274-amino-acid chain: Diaminopimelate epimerase (274 aa).

Substrate contacts are provided by N11, Q44, and N64. C73 serves as the catalytic Proton donor. Substrate is bound by residues 74-75 (GN), N157, N190, and 208-209 (ER). The active-site Proton acceptor is the C217. A substrate-binding site is contributed by 218 to 219 (GS).

Belongs to the diaminopimelate epimerase family. Homodimer.

Its subcellular location is the cytoplasm. The enzyme catalyses (2S,6S)-2,6-diaminopimelate = meso-2,6-diaminopimelate. The protein operates within amino-acid biosynthesis; L-lysine biosynthesis via DAP pathway; DL-2,6-diaminopimelate from LL-2,6-diaminopimelate: step 1/1. Catalyzes the stereoinversion of LL-2,6-diaminopimelate (L,L-DAP) to meso-diaminopimelate (meso-DAP), a precursor of L-lysine and an essential component of the bacterial peptidoglycan. This chain is Diaminopimelate epimerase, found in Actinobacillus succinogenes (strain ATCC 55618 / DSM 22257 / CCUG 43843 / 130Z).